Reading from the N-terminus, the 143-residue chain is MAKKITGYIKLQVPAGKANPSPPIGPALGQRGVNIMEFCKAFNAKSQGMEPGTPLPTIITVYADRSFSFESKMPPVSYLLKKAINLKSGSKEPGKAVAGKIKRSQIVEIANTKMPDLNANDVEAATRIIEGSARAMGLEVVEG.

Belongs to the universal ribosomal protein uL11 family. In terms of assembly, part of the ribosomal stalk of the 50S ribosomal subunit. Interacts with L10 and the large rRNA to form the base of the stalk. L10 forms an elongated spine to which L12 dimers bind in a sequential fashion forming a multimeric L10(L12)X complex. One or more lysine residues are methylated.

Forms part of the ribosomal stalk which helps the ribosome interact with GTP-bound translation factors. The chain is Large ribosomal subunit protein uL11 from Zymomonas mobilis subsp. mobilis (strain ATCC 31821 / ZM4 / CP4).